Reading from the N-terminus, the 687-residue chain is Translation initiation factor IF-2 (687 aa).

The region spanning 186–355 (KRPPIVTVMG…LLTAEMLELK (170 aa)) is the tr-type G domain. The segment at 195-202 (GHVDHGKT) is G1. 195 to 202 (GHVDHGKT) serves as a coordination point for GTP. The tract at residues 220 to 224 (GITQH) is G2. The tract at residues 241-244 (DTPG) is G3. GTP-binding positions include 241 to 245 (DTPGH) and 295 to 298 (NKID). Residues 295–298 (NKID) form a G4 region. The interval 331-333 (SAK) is G5.

It belongs to the TRAFAC class translation factor GTPase superfamily. Classic translation factor GTPase family. IF-2 subfamily.

Its subcellular location is the cytoplasm. Functionally, one of the essential components for the initiation of protein synthesis. Protects formylmethionyl-tRNA from spontaneous hydrolysis and promotes its binding to the 30S ribosomal subunits. Also involved in the hydrolysis of GTP during the formation of the 70S ribosomal complex. The protein is Translation initiation factor IF-2 of Clostridium botulinum (strain Alaska E43 / Type E3).